The sequence spans 219 residues: Adenylate kinase (219 aa).

10–15 lines the ATP pocket; the sequence is GAGKGT. The NMP stretch occupies residues 30–59; that stretch reads STGDMLRAAVKAGTPLGQQAKKVMDAGELV. Residues Thr31, Arg36, 57 to 59, 85 to 88, and Gln92 each bind AMP; these read ELV and GFPR. Residues 122–159 are LID; sequence GRRVHPGSGRVYHVEHNPPKEEGKDDVTGEPLVQRDDD. ATP-binding positions include Arg123 and 132 to 133; that span reads VY. The disordered stretch occupies residues 129–152; it reads SGRVYHVEHNPPKEEGKDDVTGEP. A compositionally biased stretch (basic and acidic residues) spans 133 to 152; sequence YHVEHNPPKEEGKDDVTGEP. AMP contacts are provided by Arg156 and Arg167. Gly203 is a binding site for ATP.

It belongs to the adenylate kinase family. In terms of assembly, monomer.

The protein localises to the cytoplasm. The catalysed reaction is AMP + ATP = 2 ADP. Its pathway is purine metabolism; AMP biosynthesis via salvage pathway; AMP from ADP: step 1/1. Its function is as follows. Catalyzes the reversible transfer of the terminal phosphate group between ATP and AMP. Plays an important role in cellular energy homeostasis and in adenine nucleotide metabolism. The chain is Adenylate kinase from Alkalilimnicola ehrlichii (strain ATCC BAA-1101 / DSM 17681 / MLHE-1).